Consider the following 147-residue polypeptide: Cyanate hydratase (147 aa).

Residues Arg-88, Glu-91, and Ser-114 contribute to the active site.

It belongs to the cyanase family.

It catalyses the reaction cyanate + hydrogencarbonate + 3 H(+) = NH4(+) + 2 CO2. Catalyzes the reaction of cyanate with bicarbonate to produce ammonia and carbon dioxide. This Prochlorococcus marinus (strain NATL2A) protein is Cyanate hydratase.